Here is a 163-residue protein sequence, read N- to C-terminus: Nucleotide-binding protein YajQ (163 aa).

Belongs to the YajQ family.

Nucleotide-binding protein. The protein is Nucleotide-binding protein YajQ of Escherichia coli O127:H6 (strain E2348/69 / EPEC).